The sequence spans 351 residues: Uroporphyrinogen decarboxylase (351 aa).

Substrate-binding positions include 25-29 (RQAGR), aspartate 74, tyrosine 151, serine 206, and histidine 325.

Belongs to the uroporphyrinogen decarboxylase family. As to quaternary structure, homodimer.

The protein localises to the cytoplasm. The enzyme catalyses uroporphyrinogen III + 4 H(+) = coproporphyrinogen III + 4 CO2. It functions in the pathway porphyrin-containing compound metabolism; protoporphyrin-IX biosynthesis; coproporphyrinogen-III from 5-aminolevulinate: step 4/4. Its function is as follows. Catalyzes the decarboxylation of four acetate groups of uroporphyrinogen-III to yield coproporphyrinogen-III. This is Uroporphyrinogen decarboxylase from Pelodictyon phaeoclathratiforme (strain DSM 5477 / BU-1).